A 352-amino-acid chain; its full sequence is Phosphoribosylformylglycinamidine cyclo-ligase (352 aa).

This sequence belongs to the AIR synthase family.

Its subcellular location is the cytoplasm. The enzyme catalyses 2-formamido-N(1)-(5-O-phospho-beta-D-ribosyl)acetamidine + ATP = 5-amino-1-(5-phospho-beta-D-ribosyl)imidazole + ADP + phosphate + H(+). It participates in purine metabolism; IMP biosynthesis via de novo pathway; 5-amino-1-(5-phospho-D-ribosyl)imidazole from N(2)-formyl-N(1)-(5-phospho-D-ribosyl)glycinamide: step 2/2. This chain is Phosphoribosylformylglycinamidine cyclo-ligase, found in Saccharophagus degradans (strain 2-40 / ATCC 43961 / DSM 17024).